We begin with the raw amino-acid sequence, 664 residues long: Protein-arginine deiminase type-3 (664 aa).

It belongs to the protein arginine deiminase family. The cofactor is Ca(2+). In terms of tissue distribution, epidermis and hair follicles.

The protein resides in the cytoplasm. The catalysed reaction is L-arginyl-[protein] + H2O = L-citrullyl-[protein] + NH4(+). Functionally, catalyzes the deimination of arginine residues of proteins. This chain is Protein-arginine deiminase type-3 (Padi3), found in Mus musculus (Mouse).